A 758-amino-acid polypeptide reads, in one-letter code: Inhibitor of nuclear factor kappa-B kinase subunit alpha (758 aa).

A Protein kinase domain is found at 15–301; sequence WVMKERLGTG…LNTDSKQPQC (287 aa). ATP contacts are provided by residues 21-29 and K44; that span reads LGTGGFGHV. D145 serves as the catalytic Proton acceptor. The leucine-zipper stretch occupies residues 456 to 477; the sequence is LLRFNTNLTRYKNMMFSFSQQL. An NEMO-binding region spans residues 741 to 746; the sequence is QDWSWT.

Belongs to the protein kinase superfamily. Ser/Thr protein kinase family. I-kappa-B kinase subfamily. In terms of assembly, directly interacts with ikbkg/nemo.

The protein localises to the cytoplasm. The protein resides in the nucleus. It catalyses the reaction L-seryl-[I-kappa-B protein] + ATP = O-phospho-L-seryl-[I-kappa-B protein] + ADP + H(+). Its activity is regulated as follows. Activated when phosphorylated and inactivated when dephosphorylated. Functionally, phosphorylates inhibitors of NF-kappa-B thus leading to the dissociation of the inhibitor/NF-kappa-B complex and ultimately the degradation of the inhibitor. Phosphorylates 'Ser-10' of histone H3 at NF-kappa-B-regulated promoters during inflammatory responses triggered by cytokines. The polypeptide is Inhibitor of nuclear factor kappa-B kinase subunit alpha (chuk) (Danio rerio (Zebrafish)).